The chain runs to 287 residues: CRISPR-associated endoribonuclease Cas6 1 (287 aa).

The protein belongs to the CRISPR-associated endoribonuclease Cas6 family. As to quaternary structure, part of the aCascade ribonucleoprotein complex, minimally composed of Csa2 and Cas5a, which binds crRNA. Other possible components of aCascade in strain P1 are Cas6b (SSO1437) and Csa5 (SSO1443), while SSO1399, Cas5b (SSO1400) and SSO1401 have sometimes been seen weakly associated. Csa2 is probably the major RNA-binding subunit. The Csa2-Cas5a-crRNA complex also binds target DNA homologous to crRNA, probably forming an R-loop. Purified aCascade forms a filament about 6 nm in width.

Its function is as follows. CRISPR (clustered regularly interspaced short palindromic repeat) is an adaptive immune system that provides protection against mobile genetic elements (viruses, transposable elements and conjugative plasmids). CRISPR clusters contain spacers, sequences complementary to antecedent mobile elements, and target invading nucleic acids. CRISPR clusters are transcribed and processed into CRISPR RNA (crRNA). The sequence is that of CRISPR-associated endoribonuclease Cas6 1 (cas6a) from Saccharolobus solfataricus (strain ATCC 35092 / DSM 1617 / JCM 11322 / P2) (Sulfolobus solfataricus).